The sequence spans 201 residues: Transcription factor MYB82 (201 aa).

2 consecutive HTH myb-type domains span residues 9–61 and 62–116; these read KSYV…KNYL and RPNI…NKKP. 2 DNA-binding regions (H-T-H motif) span residues 37-61 and 89-112; these read WADI…KNYL and WSLI…NTHL. The interval 112–133 is disordered; that stretch reads LNKKPNSRRQNAPESIVGATPF.

In terms of assembly, homodimer and heterodimer with GL1. Part of the WD40-bHLH-MYB complex. Interacts with BHLH012/MYC1 and BHLH042/TT8. Interacts (via N-terminus) with GL1 and GL3. As to expression, mainly expressed in the trichomes of new leaves.

It is found in the nucleus. In terms of biological role, transcription activation factor positively regulating trichomes development. Has a function nearly equivalent to that of GL1 and can complement gl1 mutants. The chain is Transcription factor MYB82 (MYB82) from Arabidopsis thaliana (Mouse-ear cress).